The sequence spans 511 residues: Tyrosine--tRNA ligase, chloroplastic/mitochondrial (511 aa).

Y118 is a binding site for L-tyrosine. Position 122 (D122) interacts with ATP. The short motif at P123–N132 is the 'HIGH' region element. L-tyrosine is bound by residues D162, Y256, Q260, D263, and Q282. A 'KMSKS' region motif is present at residues K318–S322. K321 contributes to the ATP binding site. In terms of domain architecture, S4 RNA-binding spans L444 to I510.

It belongs to the class-I aminoacyl-tRNA synthetase family.

Its subcellular location is the plastid. The protein localises to the chloroplast. It localises to the mitochondrion. It catalyses the reaction tRNA(Tyr) + L-tyrosine + ATP = L-tyrosyl-tRNA(Tyr) + AMP + diphosphate + H(+). Functionally, catalyzes the attachment of tyrosine to tRNA(Tyr) in a two-step reaction: tyrosine is first activated by ATP to form Tyr-AMP and then transferred to the acceptor end of tRNA(Tyr). This chain is Tyrosine--tRNA ligase, chloroplastic/mitochondrial, found in Arabidopsis thaliana (Mouse-ear cress).